The chain runs to 286 residues: NAD kinase (286 aa).

Asp67 serves as the catalytic Proton acceptor. Residues 67–68 (DG), Arg72, 141–142 (ND), Arg152, Asp171, 182–187 (TAYSLS), and Gln242 each bind NAD(+).

It belongs to the NAD kinase family. Requires a divalent metal cation as cofactor.

Its subcellular location is the cytoplasm. The enzyme catalyses NAD(+) + ATP = ADP + NADP(+) + H(+). Functionally, involved in the regulation of the intracellular balance of NAD and NADP, and is a key enzyme in the biosynthesis of NADP. Catalyzes specifically the phosphorylation on 2'-hydroxyl of the adenosine moiety of NAD to yield NADP. The chain is NAD kinase from Ruminiclostridium cellulolyticum (strain ATCC 35319 / DSM 5812 / JCM 6584 / H10) (Clostridium cellulolyticum).